Consider the following 585-residue polypeptide: Aspartate--tRNA ligase (585 aa).

An L-aspartate-binding site is contributed by E171. The tract at residues 195–198 is aspartate; the sequence is QLFK. R217 contacts L-aspartate. ATP-binding positions include 217 to 219 and Q226; that span reads RDE. H448 is an L-aspartate binding site. E482 contributes to the ATP binding site. L-aspartate is bound at residue R489. 534 to 537 is an ATP binding site; sequence GLDR.

Belongs to the class-II aminoacyl-tRNA synthetase family. Type 1 subfamily. In terms of assembly, homodimer.

Its subcellular location is the cytoplasm. It catalyses the reaction tRNA(Asp) + L-aspartate + ATP = L-aspartyl-tRNA(Asp) + AMP + diphosphate. Its function is as follows. Catalyzes the attachment of L-aspartate to tRNA(Asp) in a two-step reaction: L-aspartate is first activated by ATP to form Asp-AMP and then transferred to the acceptor end of tRNA(Asp). This is Aspartate--tRNA ligase from Histophilus somni (strain 129Pt) (Haemophilus somnus).